Here is an 88-residue protein sequence, read N- to C-terminus: Small ribosomal subunit protein bS20 (88 aa).

It belongs to the bacterial ribosomal protein bS20 family.

Binds directly to 16S ribosomal RNA. The protein is Small ribosomal subunit protein bS20 of Rhodospirillum rubrum (strain ATCC 11170 / ATH 1.1.1 / DSM 467 / LMG 4362 / NCIMB 8255 / S1).